The primary structure comprises 538 residues: Syncytin-1 (538 aa).

The first 20 residues, 1-20 (MALPYHILLFTVLLPSFTLT), serve as a signal peptide directing secretion. The Extracellular segment spans residues 21–443 (APPPCRCMTS…NTGPWGLLSQ (423 aa)). N-linked (GlcNAc...) asparagine glycosylation is present at N169. A CXXC motif is present at residues 186–189 (CWIC). Cystine bridges form between C186/C189, C186/C405, and C397/C404. Residues N208, N214, N234, and N281 are each glycosylated (N-linked (GlcNAc...) asparagine). The interval 320–340 (ILPFVIGAGVLGALGTGIGGI) is fusion peptide. The tract at residues 380–396 (LQNRRALDLLTAERGGT) is immunosuppression. The short motif at 397–405 (CLFLGEECC) is the CX6CC element. N-linked (GlcNAc...) asparagine glycosylation occurs at N409. A helical membrane pass occupies residues 444-464 (WMPWILPFLGPLAAIILLLLF). The interval 465-484 (GPCIFNLLVNFVSSRIEAVK) is essential for the fusiogenic function. At 465 to 538 (GPCIFNLLVN…LLRPNSAGSS (74 aa)) the chain is on the cytoplasmic side. The interval 496–538 (KIYRRPLDRPASPRSDVNDIKCTPPEEISTAQPLLRPNSAGSS) is disordered.

It belongs to the gamma type-C retroviral envelope protein family. HERV class-I W env subfamily. The mature envelope protein (Env) consists of a trimer of SU-TM heterodimers attached probably by a labile interchain disulfide bond. Interacts with the C-type lectin CD209/DC-SIGN. Post-translationally, specific enzymatic cleavages in vivo yield mature proteins. Envelope glycoproteins are synthesized as an inactive precursor that is heavily N-glycosylated and processed likely by furin in the Golgi to yield the mature SU and TM proteins. The cleavage site between SU and TM requires the minimal sequence [KR]-X-[KR]-R. In terms of processing, the CXXC motif is highly conserved across a broad range of retroviral envelope proteins. It is thought to participate in the formation of a labile disulfide bond possibly with the CX6CC motif present in the transmembrane protein.

The protein resides in the cell membrane. The protein localises to the virion. This endogenous retroviral envelope protein has retained its original fusogenic properties and participates in trophoblast fusion and the formation of a syncytium during placenta morphogenesis. May recognize and induce fusion through binding of SLC1A4 and SLC1A5. Functionally, endogenous envelope proteins may have kept, lost or modified their original function during evolution. Retroviral envelope proteins mediate receptor recognition and membrane fusion during early infection. The surface protein (SU) mediates receptor recognition, while the transmembrane protein (TM) acts as a class I viral fusion protein. The protein may have at least 3 conformational states: pre-fusion native state, pre-hairpin intermediate state, and post-fusion hairpin state. During viral and target cell membrane fusion, the coiled coil regions (heptad repeats) assume a trimer-of-hairpins structure, positioning the fusion peptide in close proximity to the C-terminal region of the ectodomain. The formation of this structure appears to drive apposition and subsequent fusion of membranes. The sequence is that of Syncytin-1 (ERVW-1) from Gorilla gorilla gorilla (Western lowland gorilla).